We begin with the raw amino-acid sequence, 143 residues long: Large ribosomal subunit protein uL15 (143 aa).

The tract at residues 1 to 56 is disordered; sequence MELNSIKPAEGSKHAKRRVGRGIGSGLGKTAGRGHKGQKSRSGGYHKVGFEGGQMP. Residues 21–31 show a composition bias toward gly residues; that stretch reads RGIGSGLGKTA.

This sequence belongs to the universal ribosomal protein uL15 family. In terms of assembly, part of the 50S ribosomal subunit.

Functionally, binds to the 23S rRNA. This is Large ribosomal subunit protein uL15 from Delftia acidovorans (strain DSM 14801 / SPH-1).